The sequence spans 333 residues: MVISINQVRQLYVAKALKANTAALTTAGDIVPKADTAKTTLYFQSMSPAGIVASDKINLKHVLYAKATPSEALAHKLVRYSVTLDADVSATPVAGQNYILRLAFRQYIGLSEEDQYFKYGEVIARSGMTASDFYKKMAISLAKNLENKTESTPLVNIYLISAAAASTDVPVTSATKESDLTATDYNQIIIEETEQPWVLGMMPQAFIPFTPQFLTITVDGEDRLWGVATVVTPTKTVPDGHLIADLEYFCMGARGDIYRGMGYPNIIKTTYLVDPGAVYDVLDIHYFYTGSNESVQKSEKTITLVAVDDGSHTAMNALIGAINTASGLTIATL.

Residues 75–237 (HKLVRYSVTL…ATVVTPTKTV (163 aa)) are FD.

Interacts (via FD region) with the major capsid protein.

The protein resides in the virion. In terms of biological role, auxiliary capsid protein that forms an outer layer on the major capsid protein protrusions. This is Auxiliary capsid protein from Bacteroides phage crAss001 (Bacteroides phage PhiCrAss001).